Here is a 304-residue protein sequence, read N- to C-terminus: Putative S-adenosyl-L-methionine-dependent methyltransferase MSMEG_1482/MSMEI_1446 (304 aa).

S-adenosyl-L-methionine-binding positions include aspartate 130 and 159 to 160; that span reads DL.

This sequence belongs to the UPF0677 family.

In terms of biological role, exhibits S-adenosyl-L-methionine-dependent methyltransferase activity. In Mycolicibacterium smegmatis (strain ATCC 700084 / mc(2)155) (Mycobacterium smegmatis), this protein is Putative S-adenosyl-L-methionine-dependent methyltransferase MSMEG_1482/MSMEI_1446.